The primary structure comprises 274 residues: Bis(5'-nucleosyl)-tetraphosphatase, symmetrical (274 aa).

This sequence belongs to the Ap4A hydrolase family.

The enzyme catalyses P(1),P(4)-bis(5'-adenosyl) tetraphosphate + H2O = 2 ADP + 2 H(+). Its function is as follows. Hydrolyzes diadenosine 5',5'''-P1,P4-tetraphosphate to yield ADP. This Shewanella oneidensis (strain ATCC 700550 / JCM 31522 / CIP 106686 / LMG 19005 / NCIMB 14063 / MR-1) protein is Bis(5'-nucleosyl)-tetraphosphatase, symmetrical.